A 147-amino-acid polypeptide reads, in one-letter code: F420H(2)-dependent reductase Rv1155 (147 aa).

Coenzyme F420-(gamma-Glu)n-binding positions include Gln32, Gln37, Ser50, 56-60 (AKTRN), 77-79 (WSY), and His138.

The protein belongs to the F420H(2)-dependent biliverdin reductase family. In terms of assembly, homodimer.

Its function is as follows. F420H(2)-dependent reductase able to catalyze the reduction of biliverdin-IXalpha to bilirubin-IXalpha in vitro. However, kinetic parameters show that it is less efficient than the biliverdin reductase Rv2074 and suggest biliverdin-IXalpha is unlikely to be the native substrate of Rv1155, which probably catalyzes the reduction of an alternative molecule in vivo. Binds coenzyme F420, but does not bind FMN or other flavins. Cannot use pyridoxine 5'-phosphate, pyridoxamine 5'-phosphate, pyridoxal 5'-phosphate (PLP), the anti-tuberculosis drug PA-824 or aflatoxin analogs as substrates. The polypeptide is F420H(2)-dependent reductase Rv1155 (Mycobacterium tuberculosis (strain ATCC 25618 / H37Rv)).